Here is a 730-residue protein sequence, read N- to C-terminus: Elongation factor 2 (730 aa).

Residues 19–260 (EKIRNIGIVA…MVIRFLPNPL (242 aa)) enclose the tr-type G domain. GTP contacts are provided by residues 28-35 (AHIDHGKT), 94-98 (DTPGH), and 148-151 (NKVD). Position 596 is a diphthamide (H596).

This sequence belongs to the TRAFAC class translation factor GTPase superfamily. Classic translation factor GTPase family. EF-G/EF-2 subfamily.

The protein localises to the cytoplasm. Its function is as follows. Catalyzes the GTP-dependent ribosomal translocation step during translation elongation. During this step, the ribosome changes from the pre-translocational (PRE) to the post-translocational (POST) state as the newly formed A-site-bound peptidyl-tRNA and P-site-bound deacylated tRNA move to the P and E sites, respectively. Catalyzes the coordinated movement of the two tRNA molecules, the mRNA and conformational changes in the ribosome. The protein is Elongation factor 2 (fusA) of Methanosarcina thermophila.